A 207-amino-acid polypeptide reads, in one-letter code: Acyl-homoserine-lactone synthase (207 aa).

It belongs to the autoinducer synthase family.

The enzyme catalyses a fatty acyl-[ACP] + S-adenosyl-L-methionine = an N-acyl-L-homoserine lactone + S-methyl-5'-thioadenosine + holo-[ACP] + H(+). Its function is as follows. Required for the synthesis of N-butanoyl-L-homoserine lactone (BHL), an autoinducer molecule which binds to AsaR. This is Acyl-homoserine-lactone synthase (asaI) from Aeromonas salmonicida.